The chain runs to 237 residues: Phosphoribosylaminoimidazole-succinocarboxamide synthase (237 aa).

Belongs to the SAICAR synthetase family.

The catalysed reaction is 5-amino-1-(5-phospho-D-ribosyl)imidazole-4-carboxylate + L-aspartate + ATP = (2S)-2-[5-amino-1-(5-phospho-beta-D-ribosyl)imidazole-4-carboxamido]succinate + ADP + phosphate + 2 H(+). Its pathway is purine metabolism; IMP biosynthesis via de novo pathway; 5-amino-1-(5-phospho-D-ribosyl)imidazole-4-carboxamide from 5-amino-1-(5-phospho-D-ribosyl)imidazole-4-carboxylate: step 1/2. This chain is Phosphoribosylaminoimidazole-succinocarboxamide synthase, found in Enterobacter sp. (strain 638).